We begin with the raw amino-acid sequence, 176 residues long: Bifunctional protein PyrR (176 aa).

Positions 93–105 match the PRPP-binding motif; that stretch reads VILVDDVLYTGRT.

This sequence belongs to the purine/pyrimidine phosphoribosyltransferase family. PyrR subfamily. As to quaternary structure, homodimer and homohexamer; in equilibrium.

The catalysed reaction is UMP + diphosphate = 5-phospho-alpha-D-ribose 1-diphosphate + uracil. In terms of biological role, regulates transcriptional attenuation of the pyrimidine nucleotide (pyr) operon by binding in a uridine-dependent manner to specific sites on pyr mRNA. This disrupts an antiterminator hairpin in the RNA and favors formation of a downstream transcription terminator, leading to a reduced expression of downstream genes. Its function is as follows. Also displays a weak uracil phosphoribosyltransferase activity which is not physiologically significant. The chain is Bifunctional protein PyrR from Streptococcus mutans serotype c (strain ATCC 700610 / UA159).